The primary structure comprises 142 residues: Large ribosomal subunit protein uL13 (142 aa).

It belongs to the universal ribosomal protein uL13 family. In terms of assembly, part of the 50S ribosomal subunit.

In terms of biological role, this protein is one of the early assembly proteins of the 50S ribosomal subunit, although it is not seen to bind rRNA by itself. It is important during the early stages of 50S assembly. In Edwardsiella ictaluri (strain 93-146), this protein is Large ribosomal subunit protein uL13.